A 141-amino-acid chain; its full sequence is Large ribosomal subunit protein uL11 (141 aa).

This sequence belongs to the universal ribosomal protein uL11 family. As to quaternary structure, part of the ribosomal stalk of the 50S ribosomal subunit. Interacts with L10 and the large rRNA to form the base of the stalk. L10 forms an elongated spine to which L12 dimers bind in a sequential fashion forming a multimeric L10(L12)X complex. Post-translationally, one or more lysine residues are methylated.

Its function is as follows. Forms part of the ribosomal stalk which helps the ribosome interact with GTP-bound translation factors. The polypeptide is Large ribosomal subunit protein uL11 (Chloroflexus aurantiacus (strain ATCC 29366 / DSM 635 / J-10-fl)).